Here is a 94-residue protein sequence, read N- to C-terminus: Co-chaperonin GroES (94 aa).

This sequence belongs to the GroES chaperonin family. As to quaternary structure, heptamer of 7 subunits arranged in a ring. Interacts with the chaperonin GroEL.

The protein localises to the cytoplasm. Together with the chaperonin GroEL, plays an essential role in assisting protein folding. The GroEL-GroES system forms a nano-cage that allows encapsulation of the non-native substrate proteins and provides a physical environment optimized to promote and accelerate protein folding. GroES binds to the apical surface of the GroEL ring, thereby capping the opening of the GroEL channel. This chain is Co-chaperonin GroES, found in Clostridioides difficile (Peptoclostridium difficile).